The chain runs to 604 residues: Elongation factor 4 (604 aa).

Residues 7-189 (SKIRNFCIIA…SIVHLVPPPS (183 aa)) enclose the tr-type G domain. GTP contacts are provided by residues 19-24 (DHGKST) and 136-139 (NKID).

This sequence belongs to the TRAFAC class translation factor GTPase superfamily. Classic translation factor GTPase family. LepA subfamily.

The protein localises to the cell inner membrane. The enzyme catalyses GTP + H2O = GDP + phosphate + H(+). In terms of biological role, required for accurate and efficient protein synthesis under certain stress conditions. May act as a fidelity factor of the translation reaction, by catalyzing a one-codon backward translocation of tRNAs on improperly translocated ribosomes. Back-translocation proceeds from a post-translocation (POST) complex to a pre-translocation (PRE) complex, thus giving elongation factor G a second chance to translocate the tRNAs correctly. Binds to ribosomes in a GTP-dependent manner. The protein is Elongation factor 4 of Synechococcus elongatus (strain ATCC 33912 / PCC 7942 / FACHB-805) (Anacystis nidulans R2).